Reading from the N-terminus, the 79-residue chain is Small ribosomal subunit protein bS18 (79 aa).

This sequence belongs to the bacterial ribosomal protein bS18 family. In terms of assembly, part of the 30S ribosomal subunit. Forms a tight heterodimer with protein bS6.

In terms of biological role, binds as a heterodimer with protein bS6 to the central domain of the 16S rRNA, where it helps stabilize the platform of the 30S subunit. The protein is Small ribosomal subunit protein bS18 of Streptococcus pneumoniae serotype 19F (strain G54).